Reading from the N-terminus, the 733-residue chain is DNA-binding protein SATB2 (733 aa).

Residues 1–47 are disordered; sequence MERRSESPCLRDSPDRRSGSPDVKGPPPVKVARLEQNGSPMGARGRP. S20 carries the phosphoserine modification. Glycyl lysine isopeptide (Lys-Gly) (interchain with G-Cter in SUMO2) cross-links involve residues K24 and K30. S39 bears the Phosphoserine mark. Residues 57–158 enclose the CMP domain; it reads GLMIPVFCVV…VVTLKIQLQS (102 aa). K161 participates in a covalent cross-link: Glycyl lysine isopeptide (Lys-Gly) (interchain with G-Cter in SUMO2). The CUTL domain occupies 161–234; the sequence is KLEDLPAEQW…WYKKYKKIKV (74 aa). A Glycyl lysine isopeptide (Lys-Gly) (interchain with G-Cter in SUMO) cross-link involves residue K233. A Glycyl lysine isopeptide (Lys-Gly) (interchain with G-Cter in SUMO); alternate cross-link involves residue K350. K350 participates in a covalent cross-link: Glycyl lysine isopeptide (Lys-Gly) (interchain with G-Cter in SUMO2); alternate. A DNA-binding region (CUT 1) is located at residues 350 to 437; it reads KPEPTNSSVE…ERDRIYQDER (88 aa). The tract at residues 435–473 is disordered; it reads DERERSMNPNVSMVSSASSSPSSSRTPQAKTSTPTTDLP. A compositionally biased stretch (low complexity) spans 441 to 458; that stretch reads MNPNVSMVSSASSSPSSS. A Phosphoserine modification is found at S454. The segment covering 459–470 has biased composition (polar residues); the sequence is RTPQAKTSTPTT. Residue T467 is modified to Phosphothreonine. The segment at residues 473 to 560 is a DNA-binding region (CUT 2); that stretch reads PIKVDGANVN…ERDVIYEEES (88 aa). K475 is covalently cross-linked (Glycyl lysine isopeptide (Lys-Gly) (interchain with G-Cter in SUMO2)). Disordered regions lie at residues 580-617 and 691-733; these read QVLH…KPRS and DEEL…TDQR. Position 594 is a phosphoserine (S594). A DNA-binding region (homeobox) is located at residues 615–674; the sequence is PRSRTKISLEALGILQSFIHDVGLYPDQEAIHTLSAQLDLPKHTIIKFFQNQRYHVKHHG. Over residues 694-708 the composition is skewed to acidic residues; it reads LLTESEENDSEEGSE. Residues 709–733 are compositionally biased toward basic and acidic residues; sequence EMYKVEAEEENADKSKAAPAETDQR. Residue K724 forms a Glycyl lysine isopeptide (Lys-Gly) (interchain with G-Cter in SUMO2) linkage.

This sequence belongs to the CUT homeobox family. In terms of assembly, interacts with PIAS1. Interacts with ATF4 and RUNX2; resulting in enhanced DNA binding and transactivation by these transcription factors. In terms of processing, sumoylated by PIAS1. Sumoylation promotes nuclear localization, but represses transcription factor activity. In terms of tissue distribution, expressed in cortical neurons that extend axons across the corpus callosum. Also expressed in branchial arches and in cells of the osteoblast lineage, but not in chondrocytes and osteoclasts.

The protein localises to the nucleus matrix. Binds to DNA, at nuclear matrix- or scaffold-associated regions. Thought to recognize the sugar-phosphate structure of double-stranded DNA. Transcription factor controlling nuclear gene expression, by binding to matrix attachment regions (MARs) of DNA and inducing a local chromatin-loop remodeling. Acts as a docking site for several chromatin remodeling enzymes and also by recruiting corepressors (HDACs) or coactivators (HATs) directly to promoters and enhancers. Required for the initiation of the upper-layer neurons (UL1) specific genetic program and for the inactivation of deep-layer neurons (DL) and UL2 specific genes, probably by modulating Bcl11b expression. Repressor of Ctip2 and regulatory determinant of corticocortical connections in the developing cerebral cortex. May play an important role in palate formation. Acts as a molecular node in a transcriptional network regulating skeletal development and osteoblast differentiation. The protein is DNA-binding protein SATB2 (Satb2) of Mus musculus (Mouse).